Consider the following 117-residue polypeptide: Glycine cleavage system H-like protein (117 aa).

Residues 21 to 103 (IVKLGLSSQM…ESEGWFVVLQ (83 aa)) enclose the Lipoyl-binding domain. Lysine 62 is subject to N6-lipoyllysine.

It belongs to the GcvH family. It depends on (R)-lipoate as a cofactor.

The polypeptide is Glycine cleavage system H-like protein (Chlamydia trachomatis serovar L2 (strain ATCC VR-902B / DSM 19102 / 434/Bu)).